Here is a 656-residue protein sequence, read N- to C-terminus: Protein teflon (656 aa).

A C2H2-type 1 zinc finger spans residues Leu33 to His56. The segment at Asp80 to Asn131 is disordered. Over residues Ala89–Ser104 the composition is skewed to polar residues. C2H2-type zinc fingers lie at residues Tyr606–His628 and Phe632–His655.

It belongs to the Teflon family.

The protein resides in the nucleus. The protein localises to the chromosome. Its function is as follows. Specifically required in males for proper segregation of autosomal bivalents at meiosis I. Expression is required in the male germ line prior to spermatocyte stage S4. May have a role as a bridging molecule maintaining adhesion to hold autosome bivalents together via heterochromatic connections. The protein is Protein teflon of Drosophila sechellia (Fruit fly).